The primary structure comprises 31 residues: Cyclotide mden-K (31 aa).

The segment at residues 1–31 (GSIPCGESCVWIPCISSVVGCACKNKVCYKN) is a cross-link (cyclopeptide (Gly-Asn)). 3 cysteine pairs are disulfide-bonded: C5/C21, C9/C23, and C14/C28.

It belongs to the cyclotide family. Bracelet subfamily. In terms of processing, this is a cyclic peptide.

Functionally, probably participates in a plant defense mechanism. This is Cyclotide mden-K from Melicytus dentatus (Tree violet).